A 227-amino-acid polypeptide reads, in one-letter code: Ubiquitin-conjugating enzyme E2 6 (227 aa).

At 1-206 the chain is on the cytoplasmic side; sequence MASKGAYKRL…NSKQSWVKSR (206 aa). The UBC core domain maps to 5–163; sequence GAYKRLMKEY…FPELIDKNRE (159 aa). C87 (glycyl thioester intermediate) is an active-site residue. A helical membrane pass occupies residues 207–225; it reads WSIAVLVFFALALARFFGA.

The protein belongs to the ubiquitin-conjugating enzyme family.

It localises to the endoplasmic reticulum membrane. The enzyme catalyses S-ubiquitinyl-[E1 ubiquitin-activating enzyme]-L-cysteine + [E2 ubiquitin-conjugating enzyme]-L-cysteine = [E1 ubiquitin-activating enzyme]-L-cysteine + S-ubiquitinyl-[E2 ubiquitin-conjugating enzyme]-L-cysteine.. It participates in protein modification; protein ubiquitination. Functionally, catalyzes the covalent attachment of ubiquitin to other proteins. Functions in degradation of misfolded or regulated proteins localized in the endoplasmic reticulum (ER) lumen or membrane via the ubiquitin-proteasome system. Cognate E2 conjugating enzyme for the doa10 ubiquitin ligase complex, which is part of the ERAD-C pathway responsible for the rapid degradation of membrane proteins with misfolded cytoplasmic domains. The sequence is that of Ubiquitin-conjugating enzyme E2 6 (ubc6) from Schizosaccharomyces pombe (strain 972 / ATCC 24843) (Fission yeast).